Consider the following 212-residue polypeptide: FMN-dependent NAD(P)H:quinone oxidoreductase 1 (212 aa).

Residues Ser-10, 16-18, and 97-100 each bind FMN; these read SQS and MYNF. Residues Asn-99 and Tyr-131 each coordinate substrate. FMN contacts are provided by residues 145–148 and Glu-187; that span reads SRGG. A substrate-binding site is contributed by Glu-188.

It belongs to the azoreductase type 1 family. In terms of assembly, homodimer. Homotetramer formed by a dimer of dimers when the ionic strength is high. The cofactor is FMN.

It carries out the reaction 2 a quinone + NADPH + H(+) = 2 a 1,4-benzosemiquinone + NADP(+). The enzyme catalyses 2 a quinone + NADH + H(+) = 2 a 1,4-benzosemiquinone + NAD(+). The catalysed reaction is N,N-dimethyl-1,4-phenylenediamine + anthranilate + 2 NAD(+) = 2-(4-dimethylaminophenyl)diazenylbenzoate + 2 NADH + 2 H(+). With respect to regulation, azoreductase activity increases with salt strength. Functionally, quinone reductase that provides resistance to thiol-specific stress caused by electrophilic quinones. Shows a preference for benzoquinones. Also exhibits azoreductase activity. Catalyzes the reductive cleavage of the azo bond in aromatic azo compounds to the corresponding amines. NADPH is the preferred electron donor for azoreductase activity, but it can also use NADH. Can reduce different classes of azo dyes, including the common azo dyes methyl red and p-aminoazobenzene sulfonamide (PAABSA). Can activate several azo pro-drugs used in the treatment of inflammatory bowel disease (IBD), including balsalazide, sulfasalazine and olsalazine. Also acts as a nitrodeductase, and can reduce and hence activate the nitroaromatic drug nitrofurazone, a broad spectrum antibiotic. This is FMN-dependent NAD(P)H:quinone oxidoreductase 1 from Pseudomonas aeruginosa (strain ATCC 15692 / DSM 22644 / CIP 104116 / JCM 14847 / LMG 12228 / 1C / PRS 101 / PAO1).